We begin with the raw amino-acid sequence, 70 residues long: Mu-agatoxin-Ao1b (70 aa).

Positions 1 to 20 (MKAIIFFCFLSVMVFIVAEA) are cleaved as a signal peptide. A propeptide spanning residues 21 to 33 (SSLEALKIFEGER) is cleaved from the precursor. 4 cysteine pairs are disulfide-bonded: Cys35–Cys50, Cys42–Cys55, Cys49–Cys65, and Cys57–Cys63. Asn69 is subject to Asparagine amide.

The protein belongs to the neurotoxin 07 (Beta/delta-agtx) family. 04 (aga-5) subfamily. In terms of tissue distribution, expressed by the venom gland.

It localises to the secreted. In terms of biological role, insecticidal neurotoxin that modulates the insect Nav channel (DmNaV1/tipE (para/tipE)) in a unique manner, with both the activation and inactivation processes being affected. The voltage dependence of activation is shifted toward more hyperpolarized potentials (analogous to site 4 toxins) and a non-inactivating persistent sodium current is induced (site 3-like action). Interestingly, both effects take place in a voltage-dependent manner, producing a bell-shaped curve between -80 and 0 mV. This Agelena orientalis (Funnel-web spider) protein is Mu-agatoxin-Ao1b.